Reading from the N-terminus, the 555-residue chain is Transcriptional adapter 2b (555 aa).

The segment at 8–63 adopts a ZZ-type zinc-finger fold; sequence FTKYNCTNCQDDIQGIRVHCAECENFDLCLQCFAAGAEIGAHQNNHSYQFMDTGTS. 8 residues coordinate Zn(2+): Cys13, Cys16, Cys27, Cys30, Cys36, Cys39, His49, and His53. In terms of domain architecture, SANT spans 69–121; it reads RGKGAWTAREEIRLLDAIEQYGFGNWEDISKHIETKSAEDAKEEYVNKFVNGT. Residues 318–372 form a disordered region; sequence THRSTGPYGHGKTDHTHTSNGSHRPPSSSLHSPQPNLRKVEMSSGGEASSNSIAP. The segment covering 339–352 has biased composition (low complexity); that stretch reads SHRPPSSSLHSPQP. Polar residues predominate over residues 363–372; it reads GEASSNSIAP.

As to quaternary structure, component of histone acetyltransferase complexes containing Gcn5 and Ada3. Can heterooligomerize with Isoform A. Component of the Spt-Ada-Gcn5 acetyltransferase (SAGA) complex consisting of Ada1, Ada2b (Isoform B), Ada3, wda, Saf6, Spt3, Spt7, Spt20, Taf9, Taf10b, Taf12, Nipped-A/Tra1, Sf3b3, Sf3b5, not/nonstop, Sgf11, Sgf29, e(y)2, Atxn7 and Gcn5. Taf5 and Taf10, which has partially redundant properties with Taf10b, may also be part of this complex. Interacts (via C-terminus) with Spt3 and Taf12; the interactions are direct. Interacts with Ada3; the interaction is probably direct. May also interact directly with Spt7 and Gcn5. Interacts with p53. In terms of assembly, can heterooligomerize with Isoform B. Component of the Chiffon histone acetyltransferase (CHAT) complex consisting of Ada3, Sgf29, Gcn5, chif/chiffon and Ada2b (Isoform A). Interacts (via N-terminus) with Gcn5 and Ada3; the interaction is direct. Can interact directly with Spt7 in vitro but in vivo this interaction is not stable probably due to the absence of other SAGA components. Interacts with p53. In terms of tissue distribution, expressed in nurse cells of stage 10 egg chambers and transcripts are dumped into the oocyte when nurse cells degenerate at late oogenesis.

The protein localises to the nucleus. Component of several Gcn5-containing histone acetyltransferase complexes that regulate nucleosome organization; involved in acetylation of histone H3, particularly on Lys-10 (H3K9ac) and Lys-15 (H3K14ac). Regulates the transcription of a subset of genes during development; affects recruitment of RNA polymerase II. May be involved in the function of some acidic activation domains, which activate transcription at distant sites. Involved in the p53-dependent apoptosis pathway response to DNA damage by genotoxic agents. In terms of biological role, component of the SAGA histone acetyltransferase complex, which predominantly acetylates histone H3. Functionally, component of the CHAT histone acetyltransferase complex, which predominantly acetylates histone H3. The sequence is that of Transcriptional adapter 2b from Drosophila melanogaster (Fruit fly).